We begin with the raw amino-acid sequence, 459 residues long: Cysteine--tRNA ligase (459 aa).

C28 contributes to the Zn(2+) binding site. The short motif at V30–H40 is the 'HIGH' region element. Zn(2+)-binding residues include C209, H234, and E238. Positions K266–S270 match the 'KMSKS' region motif. K269 is a binding site for ATP.

This sequence belongs to the class-I aminoacyl-tRNA synthetase family. As to quaternary structure, monomer. Zn(2+) serves as cofactor.

It is found in the cytoplasm. It catalyses the reaction tRNA(Cys) + L-cysteine + ATP = L-cysteinyl-tRNA(Cys) + AMP + diphosphate. This chain is Cysteine--tRNA ligase, found in Haemophilus influenzae (strain 86-028NP).